We begin with the raw amino-acid sequence, 215 residues long: Probable nicotinate-nucleotide adenylyltransferase (215 aa).

Belongs to the NadD family.

The enzyme catalyses nicotinate beta-D-ribonucleotide + ATP + H(+) = deamido-NAD(+) + diphosphate. It functions in the pathway cofactor biosynthesis; NAD(+) biosynthesis; deamido-NAD(+) from nicotinate D-ribonucleotide: step 1/1. Its function is as follows. Catalyzes the reversible adenylation of nicotinate mononucleotide (NaMN) to nicotinic acid adenine dinucleotide (NaAD). In Gluconacetobacter diazotrophicus (strain ATCC 49037 / DSM 5601 / CCUG 37298 / CIP 103539 / LMG 7603 / PAl5), this protein is Probable nicotinate-nucleotide adenylyltransferase.